An 833-amino-acid polypeptide reads, in one-letter code: Piwi-like protein 2 (833 aa).

One can recognise a PAZ domain in the interval 227-353 (RINRVLNDNS…IPGELCFLCG (127 aa)). The segment at 313 to 338 (PMRRERKKKDEEGVEKEKEKEAPEEK) is disordered. Basic and acidic residues predominate over residues 320–338 (KKDEEGVEKEKEKEAPEEK). The 301-residue stretch at 515-815 (KMALVFVPDD…LAELVGKVHK (301 aa)) folds into the Piwi domain.

Belongs to the argonaute family. Piwi subfamily. In terms of tissue distribution, expressed in dividing adult stem cells.

In terms of biological role, required for the production of functional progeny from adult somatic stem cells (neoblasts). The chain is Piwi-like protein 2 (wi-2) from Schmidtea mediterranea (Freshwater planarian flatworm).